The sequence spans 729 residues: Zorya protein ZorA (729 aa).

3 helical membrane-spanning segments follow: residues 20–40 (PATV…FYFF), 135–155 (LPGI…MIGL), and 177–197 (VLYA…ITWL).

It belongs to the MotA family.

It is found in the cell inner membrane. Component of antiviral defense system Zorya type I, composed of ZorA, ZorB, ZorC and ZorD. Expression of Zorya type I in E.coli (strain MG1655) confers 10,000-fold resistance to phage SECphi27, 100-fold resistance to lambda, and 10-fold resistance to T7. While most T7 infected Zorya-containing cells undergo abortive infection, a minority produce viable phage progeny. These eventually accumulate to a high multiplicity of infection, leading to culture collapse by 2 hours after initial infection. ZorA and ZorB probably assemble in the cell inner membrane and exert their effect there. The sequence is that of Zorya protein ZorA from Escherichia coli O139:H28 (strain E24377A / ETEC).